A 339-amino-acid chain; its full sequence is Formyl peptide receptor-related sequence 6 (339 aa).

Over 1–23 (MEANFSIPQNGSEVVFYDSTTSR) the chain is Extracellular. 2 N-linked (GlcNAc...) asparagine glycosylation sites follow: N4 and N10. The helical transmembrane segment at 24–44 (VICIFLVVVLSITFLLGVIGN) threads the bilayer. Topologically, residues 45–62 (GLVIYVAGFRMTHTVTTI) are cytoplasmic. Residues 63–85 (CYLNLALSDFSYMASLPFQITSI) form a helical membrane-spanning segment. Over 86-99 (VMNGEWLFGWFLCK) the chain is Extracellular. C98 and C178 are oxidised to a cystine. A helical transmembrane segment spans residues 100–120 (FVHMIINVNLFLSIFLITFIA). The Cytoplasmic portion of the chain corresponds to 121 to 144 (MDRCICVLHPVWAQNHRTVNVATK). A helical transmembrane segment spans residues 145–165 (VIFGAWILVLMLIFPHCIFVT). The Extracellular portion of the chain corresponds to 166-198 (TVKDESGKVHCICNFESWAATPEEQVKVSMTVS). The helical transmembrane segment at 199-219 (LISVTISFIIGFSIPMIFIVI) threads the bilayer. Residues 220 to 241 (CYGLMAAKIGRRGFVNSSRPLR) are Cytoplasmic-facing. A helical membrane pass occupies residues 242 to 262 (VLTAVAISFFVCWFPFQLIFL). The Extracellular portion of the chain corresponds to 263 to 280 (LGNIGNKETQNNIDTWVN). Residues 281–301 (TASTLASFNSCLNPILYVFLG) traverse the membrane as a helical segment. The Cytoplasmic portion of the chain corresponds to 302–339 (QQFRERLIYSLSASLERALREDSALNSDKTRNLSSQRL).

This sequence belongs to the G-protein coupled receptor 1 family. In terms of tissue distribution, expressed exclusively in vomeronasal tissue. Expressed in 1.2 % of a subset of sensory neurons located in the apical layer of the vomeronasal organ. Each neuron appears to express only one receptor gene. Expressed in brain, spleen, skeletal muscle and at high level in testis.

Its subcellular location is the membrane. May have an olfactory function associated with the identification of pathogens or of pathogenic states. The chain is Formyl peptide receptor-related sequence 6 (Fpr-rs6) from Mus musculus (Mouse).